Here is a 637-residue protein sequence, read N- to C-terminus: Tumor protein p73 (637 aa).

The transactivation stretch occupies residues methionine 1–aspartate 46. Position 27 is a phosphothreonine (threonine 27). Tyrosine 28 is modified (phosphotyrosine; by SRC and HCK). The interval arginine 78–serine 104 is disordered. The segment covering proline 94–serine 104 has biased composition (polar residues). Tyrosine 99 carries the phosphotyrosine modification. The segment at phenylalanine 131–arginine 310 is DNA-binding. Zn(2+) is bound by residues cysteine 194, histidine 197, cysteine 258, and cysteine 262. The span at aspartate 301–glutamate 311 shows a compositional bias: basic and acidic residues. The interval aspartate 301–aspartate 351 is disordered. The interval lysine 345–leucine 380 is interaction with HIPK2. The oligomerization stretch occupies residues lysine 345 to valine 386. Residues proline 483–tyrosine 487 carry the PPxY motif motif. Positions proline 485–glycine 551 constitute an SAM domain. Lysine 628 participates in a covalent cross-link: Glycyl lysine isopeptide (Lys-Gly) (interchain with G-Cter in SUMO); in isoform Alpha. Residue lysine 628 forms a Glycyl lysine isopeptide (Lys-Gly) (interchain with G-Cter in SUMO2) linkage.

It belongs to the p53 family. In terms of assembly, found in a complex with p53/TP53 and CABLES1. The C-terminal oligomerization domain binds to the ABL1 tyrosine kinase SH3 domain. Interacts with HECW2. Isoforms Alpha and Beta interact with HIPK2. Isoform Alpha interacts with RANBP9. Interacts with WWOX. Isoform Beta interacts homotypically and with p53, whereas isoform Alpha does not. Interacts (via SAM domain) with FBXO45 (via B30.2/SPRY domain). Interacts with YAP1 (phosphorylated form). Interacts with HCK (via SH3 domain); this inhibits TP73 activity and degradation. Requires Zn(2+) as cofactor. Isoform Alpha (but not isoform Beta) is sumoylated on Lys-628, which potentiates proteasomal degradation but does not affect transcriptional activity. In terms of processing, polyubiquitinated by RCHY1/PIRH2; leading to its degradation by the proteasome.

It is found in the nucleus. Its subcellular location is the cytoplasm. Functionally, participates in the apoptotic response to DNA damage. May be a tumor suppressor protein. Is an activator of FOXJ1 expression, essential for the positive regulation of lung ciliated cell differentiation. The chain is Tumor protein p73 (TP73) from Chlorocebus aethiops (Green monkey).